A 159-amino-acid chain; its full sequence is Deoxyuridine 5'-triphosphate nucleotidohydrolase (159 aa).

Residues 78–80 (RSG), asparagine 91, 95–97 (LID), and methionine 105 each bind substrate.

The protein belongs to the dUTPase family. Mg(2+) is required as a cofactor.

The catalysed reaction is dUTP + H2O = dUMP + diphosphate + H(+). It functions in the pathway pyrimidine metabolism; dUMP biosynthesis; dUMP from dCTP (dUTP route): step 2/2. This enzyme is involved in nucleotide metabolism: it produces dUMP, the immediate precursor of thymidine nucleotides and it decreases the intracellular concentration of dUTP so that uracil cannot be incorporated into DNA. This chain is Deoxyuridine 5'-triphosphate nucleotidohydrolase, found in Buchnera aphidicola subsp. Schizaphis graminum (strain Sg).